Here is a 250-residue protein sequence, read N- to C-terminus: Proteasome subunit alpha type-7-A (250 aa).

Lys-62 is covalently cross-linked (Glycyl lysine isopeptide (Lys-Gly) (interchain with G-Cter in ubiquitin)).

Belongs to the peptidase T1A family. In terms of assembly, component of the 20S core complex of the 26S proteasome. The 26S proteasome is composed of a core protease (CP), known as the 20S proteasome, capped at one or both ends by the 19S regulatory particle (RP/PA700). The 20S proteasome core is composed of 28 subunits that are arranged in four stacked rings, resulting in a barrel-shaped structure. The two end rings are each formed by seven alpha subunits, and the two central rings are each formed by seven beta subunits. The catalytic chamber with the active sites is on the inside of the barrel. Interacts with KIN10 and KIN11 SnRK subunits, and with the SKP1A/ASK1 subunit of the SCF E3 ubiquitin ligase complex. As to expression, expressed in roots, leaves and flowers.

Its subcellular location is the cytoplasm. It is found in the nucleus. Functionally, the proteasome is a multicatalytic proteinase complex which is characterized by its ability to cleave peptides with Arg, Phe, Tyr, Leu, and Glu adjacent to the leaving group at neutral or slightly basic pH. The proteasome has an ATP-dependent proteolytic activity. Mediates the association of the SCF(TIR1) E3 ubiquitin ligase complex with the proteasome. The sequence is that of Proteasome subunit alpha type-7-A (PAD1) from Arabidopsis thaliana (Mouse-ear cress).